The following is a 455-amino-acid chain: Bifunctional protein GlmU (455 aa).

Positions Met1–Arg226 are pyrophosphorylase. UDP-N-acetyl-alpha-D-glucosamine-binding positions include Leu8–Gly11, Lys22, Gln73, Gly78–Thr79, Tyr99–Asp101, Gly136, Glu151, Asn166, and Asn224. Asp101 lines the Mg(2+) pocket. Asn224 is a Mg(2+) binding site. The segment at Arg227–Gln247 is linker. The segment at Gly248–Ser455 is N-acetyltransferase. Residues Arg330 and Lys348 each coordinate UDP-N-acetyl-alpha-D-glucosamine. Residue His360 is the Proton acceptor of the active site. The UDP-N-acetyl-alpha-D-glucosamine site is built by Tyr363 and Asn374. Acetyl-CoA-binding positions include Ala377, Asn383 to Tyr384, Ser402, Ala420, and Arg437.

The protein in the N-terminal section; belongs to the N-acetylglucosamine-1-phosphate uridyltransferase family. It in the C-terminal section; belongs to the transferase hexapeptide repeat family. Homotrimer. The cofactor is Mg(2+).

The protein resides in the cytoplasm. It carries out the reaction alpha-D-glucosamine 1-phosphate + acetyl-CoA = N-acetyl-alpha-D-glucosamine 1-phosphate + CoA + H(+). It catalyses the reaction N-acetyl-alpha-D-glucosamine 1-phosphate + UTP + H(+) = UDP-N-acetyl-alpha-D-glucosamine + diphosphate. Its pathway is nucleotide-sugar biosynthesis; UDP-N-acetyl-alpha-D-glucosamine biosynthesis; N-acetyl-alpha-D-glucosamine 1-phosphate from alpha-D-glucosamine 6-phosphate (route II): step 2/2. It functions in the pathway nucleotide-sugar biosynthesis; UDP-N-acetyl-alpha-D-glucosamine biosynthesis; UDP-N-acetyl-alpha-D-glucosamine from N-acetyl-alpha-D-glucosamine 1-phosphate: step 1/1. It participates in bacterial outer membrane biogenesis; LPS lipid A biosynthesis. Functionally, catalyzes the last two sequential reactions in the de novo biosynthetic pathway for UDP-N-acetylglucosamine (UDP-GlcNAc). The C-terminal domain catalyzes the transfer of acetyl group from acetyl coenzyme A to glucosamine-1-phosphate (GlcN-1-P) to produce N-acetylglucosamine-1-phosphate (GlcNAc-1-P), which is converted into UDP-GlcNAc by the transfer of uridine 5-monophosphate (from uridine 5-triphosphate), a reaction catalyzed by the N-terminal domain. In Pseudomonas entomophila (strain L48), this protein is Bifunctional protein GlmU.